The chain runs to 118 residues: Large ribosomal subunit protein bL17 (118 aa).

It belongs to the bacterial ribosomal protein bL17 family. As to quaternary structure, part of the 50S ribosomal subunit. Contacts protein L32.

The protein is Large ribosomal subunit protein bL17 of Phytoplasma australiense.